Here is a 763-residue protein sequence, read N- to C-terminus: Glycerophosphodiester phosphodiesterase GDPDL1 (763 aa).

The N-terminal stretch at 1-35 is a signal peptide; it reads MNSRPSNPTKLVIRSSTLLFCGVVLIHLFAAQIDA. The Extracellular segment spans residues 36 to 744; sequence QRSTSRWQTL…STIAQAPSGQ (709 aa). A GP-PDE 1 domain is found at 50–350; sequence PLVIARGGFS…DFPITASAAV (301 aa). 10 N-linked (GlcNAc...) asparagine glycosylation sites follow: Asn105, Asn192, Asn248, Asn257, Asn315, Asn359, Asn430, Asn534, Asn547, and Asn654. One can recognise a GP-PDE 2 domain in the interval 366-668; that stretch reads FLVISKDGAS…EFPFTAARYK (303 aa). Residues 745–762 form a helical membrane-spanning segment; that stretch reads TRLKLSLLLSVFFLSLLL. Residue Leu763 is a topological domain, cytoplasmic.

Belongs to the glycerophosphoryl diester phosphodiesterase family. Requires Ca(2+) as cofactor. In terms of tissue distribution, expressed in rosette and cauline leaves, stems, flowers and siliques.

It is found in the cell membrane. It carries out the reaction a sn-glycero-3-phosphodiester + H2O = an alcohol + sn-glycerol 3-phosphate + H(+). Its function is as follows. Hydrolyzes glycerolphosphoglycerol, glycerophosphocholine and glycerophosphoethanolamine in vitro. The sequence is that of Glycerophosphodiester phosphodiesterase GDPDL1 from Arabidopsis thaliana (Mouse-ear cress).